The chain runs to 406 residues: MDLFPVLKELAQKTPSKILLIVLDGVGGLPLEPGGPTELEAAKTPNLDRLAEESALGLLTPVYPGLAPGSGPGHLALFGYDPFRYVVGRGALSALGLGADFREGDVALRGNFATLDPEGKVVDRRAGRPPTEENQRVVAKLKEAIPRIEDVEVHFYTESEHRFLVVLRGEGLGDAVTDTDPQKTGLPPLKAKALDEASERTARLVNLLSERIREVLKDEPRMNGALFRGASKKPSFPRMQEVYKLTPAAIASYPMYKGLASLVGMEVLPVEGEGDALEGKLKALKENWGRYDFFYFHVKKTDAMGEDGNFHGKVEKVELFDALLPEILALGPDVLAITGDHSTPALLKAHSWHPVPLLLKAPYLRADEARRFTEREAQRGSLGHLRGMELMPLLLAHAGKLLKYGA.

The protein belongs to the BPG-independent phosphoglycerate mutase family. A-PGAM subfamily.

It carries out the reaction (2R)-2-phosphoglycerate = (2R)-3-phosphoglycerate. Its pathway is carbohydrate degradation; glycolysis; pyruvate from D-glyceraldehyde 3-phosphate: step 3/5. Its function is as follows. Catalyzes the interconversion of 2-phosphoglycerate and 3-phosphoglycerate. In Thermus thermophilus (strain ATCC BAA-163 / DSM 7039 / HB27), this protein is Probable 2,3-bisphosphoglycerate-independent phosphoglycerate mutase.